The following is a 3011-amino-acid chain: Chromodomain-helicase-DNA-binding protein 7 (3011 aa).

Disordered stretches follow at residues 90 to 146 (ISNA…SMWG), 159 to 189 (PYQQ…QHMQ), 202 to 422 (MQQH…GSAG), 502 to 806 (QQLP…VEKI), and 941 to 960 (PEME…SESS). Residues 159 to 168 (PYQQQQQQPQ) show a composition bias toward low complexity. A compositionally biased stretch (pro residues) spans 169–179 (PTQPPQAPSGP). Positions 203–215 (QQHGQPQQQRMNQ) are enriched in low complexity. Composition is skewed to polar residues over residues 216–227 (FSQGQEGLNQGN), 241–258 (VPQQ…SVQQ), 291–347 (QTLN…NQSV), and 374–393 (GSLN…QGTY). Residues 502-516 (QQLPSQQQSFQQQMP) are compositionally biased toward low complexity. 2 stretches are compositionally biased toward polar residues: residues 576–586 (TQVSGPNTQLV) and 630–641 (DSQNLSRNSVDC). 2 stretches are compositionally biased toward basic and acidic residues: residues 655–684 (KKEP…EPKE) and 718–730 (KGKE…DLDK). Residues 747–759 (QKRRSSRQVKRKR) are compositionally biased toward basic residues. Basic and acidic residues predominate over residues 760–770 (YTEDLEFKISD). A compositionally biased stretch (polar residues) spans 783 to 795 (SPSNTSQSEQQES). Chromo domains are found at residues 801–868 (PVVE…GQNK) and 883–948 (VEID…RVER). In terms of domain architecture, Helicase ATP-binding spans 981–1155 (LFNWYNTRNC…FSLLHFLEPG (175 aa)). Position 994–1001 (994–1001 (DEMGLGKT)) interacts with ATP. The DEAH box signature appears at 1106–1109 (DEAH). Positions 1295–1465 (LIDKLLPKLK…LSKKEIEDLL (171 aa)) constitute a Helicase C-terminal domain. Disordered stretches follow at residues 1577 to 1602 (FSDL…SQGY), 1836 to 1869 (GTDM…KDEI), and 2136 to 2291 (GTGN…GFYM). Residues 1585 to 1597 (EEKPSTKPRRPQD) show a composition bias toward basic and acidic residues. A compositionally biased stretch (acidic residues) spans 1845-1856 (DGGEFDREDEDP). Basic and acidic residues predominate over residues 1857 to 1867 (EYKPTRTPFKD). The segment covering 2136-2145 (GTGNANTVSS) has biased composition (polar residues). Composition is skewed to basic and acidic residues over residues 2166–2207 (QEEK…KQDC) and 2218–2238 (CELK…SEKG). Residues 2239-2253 (SEEDEEEKLDDDDKS) are compositionally biased toward acidic residues. Residues 2403-2433 (RRRRRKIEIEAERAAKRRNLMEMVAQLRESQ) adopt a coiled-coil conformation. Serine 2561 is subject to Phosphoserine. Disordered regions lie at residues 2825-2900 (TTGN…LPTN) and 2946-3011 (GSNE…ENDE). Positions 2841 to 2851 (GASKAEEKKNE) are enriched in basic and acidic residues. The span at 2864–2877 (DTVSATDSANGSVS) shows a compositional bias: polar residues. Positions 2878–2893 (AATAATTATATTTTTT) are enriched in low complexity. Positions 2948 to 2964 (NEEKATDKTEGTAFKDE) are enriched in basic and acidic residues. 2 stretches are compositionally biased toward acidic residues: residues 2965–2974 (ENLEGSDAEE) and 2984–3011 (ILED…ENDE).

It belongs to the SNF2/RAD54 helicase family. In terms of tissue distribution, expressed in the neural epithelium, otic placodes, optic placodes, branchial arches, and the olfactory placodes,.

The protein resides in the nucleus. The catalysed reaction is ATP + H2O = ADP + phosphate + H(+). In terms of biological role, ATP-dependent chromatin-remodeling factor, slides nucleosomes along DNA; nucleosome sliding requires ATP.Probable transcription regulator. Maybe involved in the in 45S precursor rRNA production. This Gallus gallus (Chicken) protein is Chromodomain-helicase-DNA-binding protein 7 (CHD7).